A 325-amino-acid chain; its full sequence is Apoptosis-enhancing nuclease (325 aa).

Residues 27-35 (RKRHKRRSR) carry the Nucleolar localization signal motif. The disordered stretch occupies residues 53-105 (LSMPPEPGSSPLPTPFGAVTATEDASSGKQCPRAGSGGAPCSRRPAPGKASGP). Pro residues predominate over residues 56–66 (PPEPGSSPLPT). One can recognise an Exonuclease domain in the interval 110–266 (CVAIDCEMVG…EDATTAMELY (157 aa)). Positions 165–188 (RQHMCKAIPFQVAQKEILKLLKGK) match the Nuclear localization signal motif. The tract at residues 281–325 (LWTCPEDREPDSSTDMEQYMEDQYWPDDLAHGSRGGAREAQDRRN) is disordered. The segment covering 308-325 (DLAHGSRGGAREAQDRRN) has biased composition (basic and acidic residues).

Its subcellular location is the nucleus. It localises to the nucleolus. Exonuclease with activity against single- and double-stranded DNA and RNA. Mediates p53-induced apoptosis. When induced by p53 following DNA damage, digests double-stranded DNA to form single-stranded DNA and amplifies DNA damage signals, leading to enhancement of apoptosis. The polypeptide is Apoptosis-enhancing nuclease (AEN) (Pongo abelii (Sumatran orangutan)).